The chain runs to 231 residues: NifU-like protein 1, chloroplastic (231 aa).

Residues 1–69 constitute a chloroplast transit peptide; that stretch reads MMASLATSIS…SSQGEKISPL (69 aa).

It belongs to the NifU family. As to quaternary structure, homodimer; disulfide-linked. Predominantly expressed in floral stalks and siliques. Expressed in leaves, cauline leaves, flower stalks and flowers (at protein level).

The protein localises to the plastid. The protein resides in the chloroplast stroma. Molecular scaffold for [Fe-S] cluster assembly of chloroplastic iron-sulfur proteins. This Arabidopsis thaliana (Mouse-ear cress) protein is NifU-like protein 1, chloroplastic (NIFU1).